The chain runs to 356 residues: sn-glycerol-3-phosphate import ATP-binding protein UgpC (356 aa).

An ABC transporter domain is found at 4-235 (LKLQAVTKSW…PASRFVASFI (232 aa)). Residue 37-44 (GPSGCGKS) participates in ATP binding.

It belongs to the ABC transporter superfamily. sn-glycerol-3-phosphate importer (TC 3.A.1.1.3) family. The complex is composed of two ATP-binding proteins (UgpC), two transmembrane proteins (UgpA and UgpE) and a solute-binding protein (UgpB).

It is found in the cell inner membrane. The enzyme catalyses sn-glycerol 3-phosphate(out) + ATP + H2O = sn-glycerol 3-phosphate(in) + ADP + phosphate + H(+). Functionally, part of the ABC transporter complex UgpBAEC involved in sn-glycerol-3-phosphate (G3P) import. Responsible for energy coupling to the transport system. This chain is sn-glycerol-3-phosphate import ATP-binding protein UgpC, found in Salmonella typhimurium (strain LT2 / SGSC1412 / ATCC 700720).